We begin with the raw amino-acid sequence, 282 residues long: MKLCYNQATTLENSNLVKDLEYCEKNGYDYIEIRTMDKLPEYLKDHTLDELKHFFQTNHIKPLALNALVFFNNRDEAGYKEIITEFKGMMETAKALNIPYVVAVPLVTEEKILKSEIKRSCVNVLTELSEIAKPYGVKVALEFIGHPQCTVNTFGQAYEIVEAVGRDNIGLVLDCFHFHAMGSNISDLEKADISKIFILHMDDTEDFPVGFLTDEDRVWPGHGAINLDQMLSILKEKGYSGAVSVELFRPEYYQLSAEEAIKTAKDTTVEVVSKHFTLETTK.

A divalent metal cation-binding residues include E142, D174, H200, and E246.

It belongs to the IolI family. A divalent metal cation is required as a cofactor.

It carries out the reaction scyllo-inosose = scyllo-inosine. The protein operates within polyol metabolism; myo-inositol degradation into acetyl-CoA. Functionally, involved in the reversible interconverion of 2-keto-myo-inositol (2KMI, inosose or 2,4,6/3,5-pentahydroxycyclohexanone) to 1-keto-D-chiro-inositol (1KDCI or 2,3,5/4,6-pentahydroxycyclohexanone). The chain is Inosose isomerase (iolI) from Halalkalibacterium halodurans (strain ATCC BAA-125 / DSM 18197 / FERM 7344 / JCM 9153 / C-125) (Bacillus halodurans).